The sequence spans 502 residues: MSIRAEEISALIKQQIENYQSEIEVSDVGTVIQVGDGIARAHGLDNVMAGELVEFSNGVMGLAQNLEENNVGIIILGPYTEIREGDEVRRTGRIMQVPVGKELIGRVVNPLGQPVDGLGPINTTNTRPIESPAPGVMDRKSVHEPLQTGIKAIDALVPIGRGQRELIIGDRQTGKTAVALDTIINQKDEDMICIYVAIGQKESTVRNVVETLRKHGALEYTIVVTASASQPAPLLYLAPYAGVTMGEEFMYNGKHVLVVYDDLSKQAAAYRELSLLLRRPPGREAYPGDVFYLHSRLLERAAKLSDARGGGSLTALPFIETQAGDVSAYIPTNVISITDGQIFLQSDLFFSGVRPAIDAGTSVSRVGGSAQIKAMSKVSGTLRLDLASYRELEAFAQFGSDLDKATQAKLNRGARTVEVLKQGLHKPLRVEKQVIILYALTRGFLDDIPVVDITRFEEEFHAWLDSNATDLLEEIRTTKKLADDDKFAAAINGFKKVFVASE.

The disordered stretch occupies residues 115 to 135; it reads VDGLGPINTTNTRPIESPAPG. 169–176 contributes to the ATP binding site; the sequence is GDRQTGKT.

This sequence belongs to the ATPase alpha/beta chains family. F-type ATPases have 2 components, CF(1) - the catalytic core - and CF(0) - the membrane proton channel. CF(1) has five subunits: alpha(3), beta(3), gamma(1), delta(1), epsilon(1). CF(0) has three main subunits: a(1), b(2) and c(9-12). The alpha and beta chains form an alternating ring which encloses part of the gamma chain. CF(1) is attached to CF(0) by a central stalk formed by the gamma and epsilon chains, while a peripheral stalk is formed by the delta and b chains.

The protein resides in the cell membrane. The catalysed reaction is ATP + H2O + 4 H(+)(in) = ADP + phosphate + 5 H(+)(out). Its function is as follows. Produces ATP from ADP in the presence of a proton gradient across the membrane. The alpha chain is a regulatory subunit. The protein is ATP synthase subunit alpha of Bacillus cereus (strain G9842).